A 225-amino-acid polypeptide reads, in one-letter code: Two-component response regulator ARR8 (225 aa).

Residues histidine 10–methionine 145 enclose the Response regulatory domain. The residue at position 78 (aspartate 78) is a 4-aspartylphosphate.

Belongs to the ARR family. Type-A subfamily. In terms of processing, two-component system major event consists of a His-to-Asp phosphorelay between a sensor histidine kinase (HK) and a response regulator (RR). In plants, the His-to-Asp phosphorelay involves an additional intermediate named Histidine-containing phosphotransfer protein (HPt). This multistep phosphorelay consists of a His-Asp-His-Asp sequential transfer of a phosphate group between first a His and an Asp of the HK protein, followed by the transfer to a conserved His of the HPt protein and finally the transfer to an Asp in the receiver domain of the RR protein. In terms of tissue distribution, predominantly expressed in roots.

It localises to the nucleus. Functions as a response regulator involved in His-to-Asp phosphorelay signal transduction system. Phosphorylation of the Asp residue in the receiver domain activates the ability of the protein to promote the transcription of target genes. Type-A response regulators seem to act as negative regulators of the cytokinin signaling. The sequence is that of Two-component response regulator ARR8 (ARR8) from Arabidopsis thaliana (Mouse-ear cress).